The primary structure comprises 254 residues: N-acetylglucosamine-induced protein 1 (254 aa).

It is found in the cytoplasm. N-acetylglucosamine-induced protein which plays a role in the N-acetylglucosamine metabolic pathway. The chain is N-acetylglucosamine-induced protein 1 from Candida albicans (strain SC5314 / ATCC MYA-2876) (Yeast).